A 54-amino-acid chain; its full sequence is MTIIAPTTGSVSTVSSVFKYGSNSISSGSDSCSGSGSYAYGVSYGVPKIGVSLG.

This is an uncharacterized protein from Dictyostelium discoideum (Social amoeba).